The sequence spans 687 residues: Dictomallein (687 aa).

Disordered regions lie at residues 1–45 (MGNG…SRRL) and 73–112 (TAGGAAPLTPAVASPAGPTGSTPGSTPGATTAPAPSSTSA). The Peptidase M66 domain occupies 233-501 (PVFGTDADVQ…QAWIASRVLA (269 aa)). H393 is a binding site for Zn(2+). The active site involves E394. Residues H397 and H403 each coordinate Zn(2+).

This sequence belongs to the dictomallein family. Requires Zn(2+) as cofactor.

The chain is Dictomallein (dtmL) from Burkholderia mallei (strain NCTC 10247).